The chain runs to 445 residues: tRNA modification GTPase MnmE (445 aa).

Positions 24, 81, and 121 each coordinate (6S)-5-formyl-5,6,7,8-tetrahydrofolate. Residues glycine 218–arginine 369 form the TrmE-type G domain. GTP contacts are provided by residues asparagine 228–threonine 233, serine 247–threonine 253, aspartate 272–glycine 275, and serine 350–arginine 352. Positions 232 and 253 each coordinate Mg(2+). A (6S)-5-formyl-5,6,7,8-tetrahydrofolate-binding site is contributed by lysine 445.

The protein belongs to the TRAFAC class TrmE-Era-EngA-EngB-Septin-like GTPase superfamily. TrmE GTPase family. As to quaternary structure, homodimer. Heterotetramer of two MnmE and two MnmG subunits. It depends on K(+) as a cofactor.

The protein localises to the cytoplasm. Exhibits a very high intrinsic GTPase hydrolysis rate. Involved in the addition of a carboxymethylaminomethyl (cmnm) group at the wobble position (U34) of certain tRNAs, forming tRNA-cmnm(5)s(2)U34. The protein is tRNA modification GTPase MnmE of Bradyrhizobium sp. (strain BTAi1 / ATCC BAA-1182).